The primary structure comprises 478 residues: PRAME family member 26 (478 aa).

Residues 99–126 (RWKLQVLDLQDVCENFWMVWSEAMARGC) form an LRR 1; degenerate repeat. The stretch at 181–205 (HLCCKKLKILGMPFRNIRSILKMVN) is one LRR 2; degenerate repeat. One copy of the LRR 3; degenerate repeat lies at 206–232 (LDCIQEVEVNCKWVLPILTQFTPYLGH). An LRR 4; degenerate repeat occupies 233 to 268 (MRNLQKLVLSHMDVSRYVSPEQKKEIVTQFTTQFLK). LRR repeat units follow at residues 269-294 (LHCL…LSCL), 295-326 (KTSL…SQLK), 327-347 (TLDL…QILL), 351-378 (AATL…ALSR), and 379-403 (CFEL…LLSH).

This sequence belongs to the PRAME family.

In Homo sapiens (Human), this protein is PRAME family member 26.